The following is a 122-amino-acid chain: Biogenesis of lysosome-related organelles complex 1 subunit CNL1 (122 aa).

Residues 1–10 (MQDNSSHSRE) are compositionally biased toward basic and acidic residues. Residues 1 to 21 (MQDNSSHSRESASAGDDPLGI) are disordered. Residues 63–95 (ENTIDKNIAKFKELLEKCDTLENHYEMLNQLAI) adopt a coiled-coil conformation.

Belongs to the BLOC1S4 family. Component of the biogenesis of lysosome-related organelles complex-1 (BLOC-1) composed of at least BLI1, BLS1, CNL1, KXD1, SNN1 and VAB2.

The protein resides in the cytoplasm. Its function is as follows. Component of the biogenesis of lysosome-related organelles complex-1 (BLOC-1), a complex that is involved in endosomal cargo sorting. In Saccharomyces cerevisiae (strain RM11-1a) (Baker's yeast), this protein is Biogenesis of lysosome-related organelles complex 1 subunit CNL1 (CLN1).